Reading from the N-terminus, the 155-residue chain is Endoribonuclease YbeY (155 aa).

The Zn(2+) site is built by His114, His118, and His124.

This sequence belongs to the endoribonuclease YbeY family. Zn(2+) serves as cofactor.

Its subcellular location is the cytoplasm. In terms of biological role, single strand-specific metallo-endoribonuclease involved in late-stage 70S ribosome quality control and in maturation of the 3' terminus of the 16S rRNA. The sequence is that of Endoribonuclease YbeY from Baumannia cicadellinicola subsp. Homalodisca coagulata.